The primary structure comprises 150 residues: Deoxyuridine 5'-triphosphate nucleotidohydrolase (150 aa).

Residues 69–71 (RSG), Asn-82, and 86–88 (TID) each bind substrate.

The protein belongs to the dUTPase family. It depends on Mg(2+) as a cofactor.

The enzyme catalyses dUTP + H2O = dUMP + diphosphate + H(+). It functions in the pathway pyrimidine metabolism; dUMP biosynthesis; dUMP from dCTP (dUTP route): step 2/2. Its function is as follows. This enzyme is involved in nucleotide metabolism: it produces dUMP, the immediate precursor of thymidine nucleotides and it decreases the intracellular concentration of dUTP so that uracil cannot be incorporated into DNA. The protein is Deoxyuridine 5'-triphosphate nucleotidohydrolase of Syntrophus aciditrophicus (strain SB).